Consider the following 268-residue polypeptide: MLPYPQIDPVALAIGPLKIHWYGLMYLIGIGGAWLLASRRLNRFDPTWSREKLSDLVFWLSMGVIVGGRLGYVLFYDLHAYLANPTLIFEVWKGGMSFHGGFIGVMLAALWFGKRNNKSFFELMDFVAPLVPIGLGAGRIGNFINAELWGKPTDVPWAMIFPPFSDPAQLPRHPSQLYQFALEGVALFVILWLFSRKPRPTMAVSGMFALFYGIFRFIVEFVRVPDAQLGYIAWGWLTMGQILCVPMILAGLGLIWWAYNRKPTAKPA.

The next 7 helical transmembrane spans lie at 10-30 (VALAIGPLKIHWYGLMYLIGI), 56-76 (LVFWLSMGVIVGGRLGYVLFY), 92-112 (WKGGMSFHGGFIGVMLAALWF), 120-140 (FFELMDFVAPLVPIGLGAGRI), 174-194 (PSQLYQFALEGVALFVILWLF), 202-222 (MAVSGMFALFYGIFRFIVEFV), and 236-256 (WLTMGQILCVPMILAGLGLIW). Arg-139 contacts a 1,2-diacyl-sn-glycero-3-phospho-(1'-sn-glycerol).

It belongs to the Lgt family.

It is found in the cell inner membrane. It catalyses the reaction L-cysteinyl-[prolipoprotein] + a 1,2-diacyl-sn-glycero-3-phospho-(1'-sn-glycerol) = an S-1,2-diacyl-sn-glyceryl-L-cysteinyl-[prolipoprotein] + sn-glycerol 1-phosphate + H(+). Its pathway is protein modification; lipoprotein biosynthesis (diacylglyceryl transfer). Catalyzes the transfer of the diacylglyceryl group from phosphatidylglycerol to the sulfhydryl group of the N-terminal cysteine of a prolipoprotein, the first step in the formation of mature lipoproteins. This is Phosphatidylglycerol--prolipoprotein diacylglyceryl transferase from Pseudomonas putida (strain ATCC 700007 / DSM 6899 / JCM 31910 / BCRC 17059 / LMG 24140 / F1).